The primary structure comprises 700 residues: Protein UL29/28 (700 aa).

A disordered region spans residues 1–30 (MSGRRKGCSAATASSSSSSPPSRLPLPGHA). Residues 9-21 (SAATASSSSSSPP) show a composition bias toward low complexity.

The protein belongs to the herpesviridae US22 family. In terms of assembly, interacts with UL38 and host HDAC1; these interactions are necessary for the HDAC1 interaction with UL38. Interacts with host MTA2.

It localises to the virion. Its subcellular location is the host nucleus. It is found in the host cytoplasm. Contributes to activation of immediate-early gene expression. The protein is Protein UL29/28 (UL29) of Human cytomegalovirus (strain Merlin) (HHV-5).